Reading from the N-terminus, the 422-residue chain is Aminopentol aminotransferase (422 aa).

The residue at position 258 (lysine 258) is an N6-(pyridoxal phosphate)lysine.

It belongs to the class-III pyridoxal-phosphate-dependent aminotransferase family. Pyridoxal 5'-phosphate is required as a cofactor.

Its subcellular location is the cytoplasm. The catalysed reaction is (2S,3S,5R,10R,12S,14S,15R,16R)-2-amino-12,16-dimethylicosane-3,5,10,14,15-pentol + pyruvate = (3S,5R,10R,12S,14S,15R,16R)-3,5,10,14,15-pentahydroxy-12,16-dimethylicosan-2-one + L-alanine. Its function is as follows. Involved in degradation of fumonisin B1. Catalyzes the deamination of aminopentol (HFB1) to 2-keto-HFB1. Pyruvate is the preferred cosubstrate, but it can also use several other alpha-keto acids as amino group acceptors. The chain is Aminopentol aminotransferase (fumI) from Sphingopyxis macrogoltabida (Sphingomonas macrogoltabidus).